Here is a 181-residue protein sequence, read N- to C-terminus: Major urinary protein 11 (181 aa).

The signal sequence occupies residues 1-19 (MKMLLLLLCLGLTLVCVHA). Cys83 and Cys176 are disulfide-bonded.

It belongs to the calycin superfamily. Lipocalin family.

It localises to the secreted. Its function is as follows. Major urinary proteins (Mups) bind pheromones, and thus stabilize them to allow slow release into the air from urine marks. May protect pheromones from oxidation. May also act as pheromones themselves. In this context, they play a role in the regulation of social behaviors, such as aggression, mating, pup-suckling, territory establishment and dominance. Binds the pheromone analog 2-sec-butyl-4,5-dihydrothiazole (SBT) in vitro. The protein is Major urinary protein 11 of Mus musculus (Mouse).